We begin with the raw amino-acid sequence, 230 residues long: Protein UPS2, mitochondrial (230 aa).

In terms of domain architecture, PRELI/MSF1 spans 1–175; that stretch reads MKLFQNSYDF…VLQVFSENWE (175 aa).

The protein belongs to the slowmo family. As to quaternary structure, interacts with MDM35.

The protein localises to the mitochondrion inner membrane. It localises to the mitochondrion intermembrane space. Functionally, required for mitochondrial cristae morphogenesis and MGM1-processing. Controls the stability of mitochondrial phosphatidylethanolamine (PE). With UPS1, controls the level of cardiolipin in mitochondria. Cardiolipin is a unique phospholipid with four fatty acid chains and is present mainly in the mitochondrial inner membrane where it stabilizes the electron transport chain supercomplex between complexes III and IV through direct interaction of their subunits. The chain is Protein UPS2, mitochondrial (UPS2) from Saccharomyces cerevisiae (strain ATCC 204508 / S288c) (Baker's yeast).